The chain runs to 243 residues: Probable HTH-type transcriptional regulator GfsR (243 aa).

The tract at residues 154–179 (AAVARPDTSGSATGRTGDSSPSLALS) is disordered. Residues 161 to 178 (TSGSATGRTGDSSPSLAL) show a composition bias toward polar residues. The region spanning 171–236 (DSSPSLALSP…QALLRWLGHP (66 aa)) is the HTH luxR-type domain. Positions 195–214 (VREIAVEMRLAEKTVRNYLS) form a DNA-binding region, H-T-H motif.

Its pathway is antibiotic biosynthesis. Probable DNA-binding protein that contributes to the control of expression of the biosynthesis operon of the 16-membered macrolide antibiotics FD-891 and FD-892. Might be a member of a two-component regulatory system; the putative sensor kinase gene is unknown. In Streptomyces halstedii, this protein is Probable HTH-type transcriptional regulator GfsR.